We begin with the raw amino-acid sequence, 824 residues long: Glycerol-3-phosphate acyltransferase (824 aa).

Residues 302-307 carry the HXXXXD motif motif; sequence CHRSHM.

It belongs to the GPAT/DAPAT family.

Its subcellular location is the cell inner membrane. It carries out the reaction sn-glycerol 3-phosphate + an acyl-CoA = a 1-acyl-sn-glycero-3-phosphate + CoA. It participates in phospholipid metabolism; CDP-diacylglycerol biosynthesis; CDP-diacylglycerol from sn-glycerol 3-phosphate: step 1/3. This chain is Glycerol-3-phosphate acyltransferase, found in Actinobacillus pleuropneumoniae serotype 5b (strain L20).